The sequence spans 1074 residues: Topoisomerase 1-associated factor 1 (1074 aa).

Disordered stretches follow at residues 572 to 595 (NTHK…QRKI) and 936 to 1074 (EEPP…DRET). 2 stretches are compositionally biased toward basic residues: residues 948–962 (LLRR…RRRS) and 978–991 (GHQH…KRAK). The span at 1014–1031 (EATRRFFENEERLRREMD) shows a compositional bias: basic and acidic residues. Residues 1046–1055 (VKRKRGKKNG) show a composition bias toward basic residues.

Belongs to the timeless family.

Its subcellular location is the nucleus. Functionally, involved in chromosome segregation during meiosis and DNA damage repair. The protein is Topoisomerase 1-associated factor 1 (TOF1) of Cryptococcus neoformans var. neoformans serotype D (strain B-3501A) (Filobasidiella neoformans).